The chain runs to 258 residues: TLC domain-containing protein 4 A (258 aa).

A run of 7 helical transmembrane segments spans residues Y8 to I28, I49 to C71, F92 to Y112, W118 to Y138, L144 to F164, L170 to I190, and I217 to I237. A TLC domain is found at S46–S245.

The protein belongs to the TLCD4 family.

The protein resides in the membrane. This is TLC domain-containing protein 4 A (tlcd4a) from Dictyostelium discoideum (Social amoeba).